The chain runs to 349 residues: Protein-arginine kinase (349 aa).

In terms of domain architecture, Phosphagen kinase C-terminal spans 24 to 252 (IVLSSRIRLA…SQIIEQERQA (229 aa)). Residues 27–31 (SSRIR), His89, Arg123, 174–178 (RASVM), and 205–210 (RGIYGE) each bind ATP. Positions 335–340 (RDIKRA) match the RDXXRA motif of the pArg binding pocket involved in allosteric regulation motif.

It belongs to the ATP:guanido phosphotransferase family.

It carries out the reaction L-arginyl-[protein] + ATP = N(omega)-phospho-L-arginyl-[protein] + ADP + H(+). Appears to be allosterically activated by the binding of pArg-containing polypeptides to the pArg-binding pocket localized in the C-terminal domain of McsB. Catalyzes the specific phosphorylation of arginine residues in proteins. The polypeptide is Protein-arginine kinase (Halothermothrix orenii (strain H 168 / OCM 544 / DSM 9562)).